Reading from the N-terminus, the 318-residue chain is Porphobilinogen deaminase (318 aa).

At Cys241 the chain carries S-(dipyrrolylmethanemethyl)cysteine.

The protein belongs to the HMBS family. Monomer. It depends on dipyrromethane as a cofactor.

It catalyses the reaction 4 porphobilinogen + H2O = hydroxymethylbilane + 4 NH4(+). It participates in porphyrin-containing compound metabolism; protoporphyrin-IX biosynthesis; coproporphyrinogen-III from 5-aminolevulinate: step 2/4. Tetrapolymerization of the monopyrrole PBG into the hydroxymethylbilane pre-uroporphyrinogen in several discrete steps. The protein is Porphobilinogen deaminase of Geobacter metallireducens (strain ATCC 53774 / DSM 7210 / GS-15).